A 412-amino-acid chain; its full sequence is Multifunctional CCA protein (412 aa).

ATP-binding residues include Gly8 and Arg11. Residues Gly8 and Arg11 each contribute to the CTP site. The Mg(2+) site is built by Asp21 and Asp23. 3 residues coordinate ATP: Arg91, Arg137, and Arg140. CTP-binding residues include Arg91, Arg137, and Arg140. The 102-residue stretch at 225 to 326 (TGIHVMMVID…ADMLQATDAY (102 aa)) folds into the HD domain.

It belongs to the tRNA nucleotidyltransferase/poly(A) polymerase family. Bacterial CCA-adding enzyme type 1 subfamily. In terms of assembly, monomer. Can also form homodimers and oligomers. Mg(2+) is required as a cofactor. Ni(2+) serves as cofactor.

It catalyses the reaction a tRNA precursor + 2 CTP + ATP = a tRNA with a 3' CCA end + 3 diphosphate. It carries out the reaction a tRNA with a 3' CCA end + 2 CTP + ATP = a tRNA with a 3' CCACCA end + 3 diphosphate. Functionally, catalyzes the addition and repair of the essential 3'-terminal CCA sequence in tRNAs without using a nucleic acid template. Adds these three nucleotides in the order of C, C, and A to the tRNA nucleotide-73, using CTP and ATP as substrates and producing inorganic pyrophosphate. tRNA 3'-terminal CCA addition is required both for tRNA processing and repair. Also involved in tRNA surveillance by mediating tandem CCA addition to generate a CCACCA at the 3' terminus of unstable tRNAs. While stable tRNAs receive only 3'-terminal CCA, unstable tRNAs are marked with CCACCA and rapidly degraded. This chain is Multifunctional CCA protein, found in Nitrosomonas eutropha (strain DSM 101675 / C91 / Nm57).